A 365-amino-acid polypeptide reads, in one-letter code: Phospho-N-acetylmuramoyl-pentapeptide-transferase (365 aa).

Helical transmembrane passes span 22–42 (YISVRIIMISITSLLITLALG), 74–94 (TMGGVLILSSVIISCLLWGDL), 95–115 (TSIYLWILILVVIFFGAIGFF), 134–154 (KFALQSIFSIVLAIVLFYLLS), 168–188 (SLYIPMGIVIFVVLAFFIING), 201–221 (GLAIVPVVLVAAGLGIYAYIE), 240–260 (LAEVAVFCAAVCGSGLAFLWF), 267–287 (VFMGDVGSLTLGAVLGVIAVM), 292–312 (LIFFIMGLLFVVEALSVMLQV), and 342–362 (KVVIRFWIISLILFLIGLAAI).

Belongs to the glycosyltransferase 4 family. MraY subfamily. The cofactor is Mg(2+).

It is found in the cell inner membrane. It catalyses the reaction UDP-N-acetyl-alpha-D-muramoyl-L-alanyl-gamma-D-glutamyl-meso-2,6-diaminopimeloyl-D-alanyl-D-alanine + di-trans,octa-cis-undecaprenyl phosphate = di-trans,octa-cis-undecaprenyl diphospho-N-acetyl-alpha-D-muramoyl-L-alanyl-D-glutamyl-meso-2,6-diaminopimeloyl-D-alanyl-D-alanine + UMP. It functions in the pathway cell wall biogenesis; peptidoglycan biosynthesis. In terms of biological role, catalyzes the initial step of the lipid cycle reactions in the biosynthesis of the cell wall peptidoglycan: transfers peptidoglycan precursor phospho-MurNAc-pentapeptide from UDP-MurNAc-pentapeptide onto the lipid carrier undecaprenyl phosphate, yielding undecaprenyl-pyrophosphoryl-MurNAc-pentapeptide, known as lipid I. This chain is Phospho-N-acetylmuramoyl-pentapeptide-transferase, found in Francisella tularensis subsp. novicida (strain U112).